Consider the following 418-residue polypeptide: Galactooligosaccharides transport system permease protein GanP (418 aa).

9 helical membrane passes run 25–45, 65–85, 129–149, 191–211, 226–246, 279–299, 323–343, 357–379, and 388–408; these read IKGI…GDLL, VFLL…LAVY, LFIL…LAFT, VVWT…LAII, ILIL…AGLF, LILM…TGVL, YITL…QFTF, GGPA…IYKL, and LAAA…LWQF. Residues 187 to 407 enclose the ABC transmembrane type-1 domain; it reads LAWTVVWTLA…VFVISIALWQ (221 aa).

It belongs to the binding-protein-dependent transport system permease family. As to quaternary structure, the complex is composed of two ATP-binding proteins (MsmX), two transmembrane proteins (GanP and GanQ) and a solute-binding protein (GanS).

The protein resides in the cell membrane. Its function is as follows. Involved in galactan degradation. Part of the ABC transporter complex GanPQS involved in the uptake of galactooligosaccharides. Responsible for the translocation of the substrate across the membrane. This chain is Galactooligosaccharides transport system permease protein GanP (ganP), found in Bacillus subtilis (strain 168).